The sequence spans 98 residues: uncharacterized protein (98 aa).

Residues 1-63 form a disordered region; sequence MPRDKKLVHR…NGHSQPAIVA (63 aa). Residues 14–29 show a composition bias toward acidic residues; sequence DVEDEDNDQREEEWSD. Positions 48 to 57 are enriched in polar residues; sequence EPSSASNGHS.

This is an uncharacterized protein from Aedes vexans (Inland floodwater mosquito).